A 231-amino-acid chain; its full sequence is MKVLIHGTGVMSSILKEVIEKEGELEISGFADDFTNEKGDMIIDFSHFSRLPAMIDYSIKNNIPMVICTTGYDETMLAKIVEASTHVPIVLSSNTCIGINLMNEIVSKIAPQLRNFDIEIIETHHNRKVDSPSGTAKSLFNVINDALDNEMFLVSGRNGLHVRDKKEIGMHSVRGGSVVGDHSVIFYGDDEIIEIKHSSTSRRIFANGAIKAAKFLVGKKPGLYRMKEVLA.

NAD(+)-binding positions include Asp33, 68–70 (CTT), and 92–95 (SSNT). His124 functions as the Proton donor/acceptor in the catalytic mechanism. His125 is a binding site for (S)-2,3,4,5-tetrahydrodipicolinate. Lys128 (proton donor) is an active-site residue. 134-135 (GT) lines the (S)-2,3,4,5-tetrahydrodipicolinate pocket.

The protein belongs to the DapB family.

Its subcellular location is the cytoplasm. It carries out the reaction (S)-2,3,4,5-tetrahydrodipicolinate + NAD(+) + H2O = (2S,4S)-4-hydroxy-2,3,4,5-tetrahydrodipicolinate + NADH + H(+). The catalysed reaction is (S)-2,3,4,5-tetrahydrodipicolinate + NADP(+) + H2O = (2S,4S)-4-hydroxy-2,3,4,5-tetrahydrodipicolinate + NADPH + H(+). The protein operates within amino-acid biosynthesis; L-lysine biosynthesis via DAP pathway; (S)-tetrahydrodipicolinate from L-aspartate: step 4/4. Its function is as follows. Catalyzes the conversion of 4-hydroxy-tetrahydrodipicolinate (HTPA) to tetrahydrodipicolinate. The chain is 4-hydroxy-tetrahydrodipicolinate reductase from Brachyspira hyodysenteriae (strain ATCC 49526 / WA1).